Reading from the N-terminus, the 407-residue chain is Multifunctional CCA protein (407 aa).

Residues glycine 8 and arginine 11 each contribute to the ATP site. CTP is bound by residues glycine 8 and arginine 11. Mg(2+)-binding residues include aspartate 21 and aspartate 23. Positions 91, 137, and 140 each coordinate ATP. 3 residues coordinate CTP: arginine 91, arginine 137, and arginine 140. In terms of domain architecture, HD spans 228–329 (TGIHTLLVAE…VKIFNKLDVW (102 aa)).

This sequence belongs to the tRNA nucleotidyltransferase/poly(A) polymerase family. Bacterial CCA-adding enzyme type 1 subfamily. As to quaternary structure, monomer. Can also form homodimers and oligomers. The cofactor is Mg(2+). Ni(2+) is required as a cofactor.

The enzyme catalyses a tRNA precursor + 2 CTP + ATP = a tRNA with a 3' CCA end + 3 diphosphate. The catalysed reaction is a tRNA with a 3' CCA end + 2 CTP + ATP = a tRNA with a 3' CCACCA end + 3 diphosphate. Functionally, catalyzes the addition and repair of the essential 3'-terminal CCA sequence in tRNAs without using a nucleic acid template. Adds these three nucleotides in the order of C, C, and A to the tRNA nucleotide-73, using CTP and ATP as substrates and producing inorganic pyrophosphate. tRNA 3'-terminal CCA addition is required both for tRNA processing and repair. Also involved in tRNA surveillance by mediating tandem CCA addition to generate a CCACCA at the 3' terminus of unstable tRNAs. While stable tRNAs receive only 3'-terminal CCA, unstable tRNAs are marked with CCACCA and rapidly degraded. This Vibrio vulnificus (strain CMCP6) protein is Multifunctional CCA protein.